Here is a 192-residue protein sequence, read N- to C-terminus: Pyridoxal 5'-phosphate synthase subunit PdxT (192 aa).

47 to 49 contributes to the L-glutamine binding site; that stretch reads GES. C78 serves as the catalytic Nucleophile. Residues R105 and 139–140 contribute to the L-glutamine site; that span reads IR. Active-site charge relay system residues include H175 and E177.

The protein belongs to the glutaminase PdxT/SNO family. In terms of assembly, in the presence of PdxS, forms a dodecamer of heterodimers. Only shows activity in the heterodimer.

The catalysed reaction is aldehydo-D-ribose 5-phosphate + D-glyceraldehyde 3-phosphate + L-glutamine = pyridoxal 5'-phosphate + L-glutamate + phosphate + 3 H2O + H(+). It catalyses the reaction L-glutamine + H2O = L-glutamate + NH4(+). It functions in the pathway cofactor biosynthesis; pyridoxal 5'-phosphate biosynthesis. Its function is as follows. Catalyzes the hydrolysis of glutamine to glutamate and ammonia as part of the biosynthesis of pyridoxal 5'-phosphate. The resulting ammonia molecule is channeled to the active site of PdxS. This chain is Pyridoxal 5'-phosphate synthase subunit PdxT, found in Solibacter usitatus (strain Ellin6076).